Here is a 749-residue protein sequence, read N- to C-terminus: Photosystem I P700 chlorophyll a apoprotein A2 (749 aa).

Transmembrane regions (helical) follow at residues 46–69 (LFSTHFGHLAVIGLWVAGNLFHIA), 135–158 (LYQGAIFIDILVAWLLFGGWLHLQ), 175–199 (MNHHLAVLFGFTNIAWTGHLVHVAI), 273–291 (ISHHHIAIGVFMIIGGHMY), 343–366 (LHFQLGLALACLGTAASLVAHHMG), 382–408 (AALYTHHQYIAIFLMCGAFSHGAIFFV), 430–452 (ALISHLSWVCMLLGFHTLALYLH), and 532–550 (FLVHHGIALGLHTTALILI). Residues cysteine 574 and cysteine 583 each coordinate [4Fe-4S] cluster. 2 consecutive transmembrane segments (helical) span residues 590–611 (STYMAIFWALNTIAWATYYWHW) and 658–680 (LSPWAYMFLAGHLVWATGFMFLI). Residues histidine 669, methionine 677, and tyrosine 685 each contribute to the divinyl chlorophyll a site. Position 686 (tryptophan 686) interacts with phylloquinone. A helical transmembrane segment spans residues 722-742 (LVGVTHFAVGNIFTFGAFVIA).

This sequence belongs to the PsaA/PsaB family. The PsaA/B heterodimer binds the P700 chlorophyll special pair and subsequent electron acceptors. PSI consists of a core antenna complex that captures photons, and an electron transfer chain that converts photonic excitation into a charge separation. The cyanobacterial PSI reaction center is composed of one copy each of PsaA,B,C,D,E,F,I,J,K,L,M and X, and forms trimeric complexes. PSI electron transfer chain: 5 divinyl chlorophyll a, 1 divinyl chlorophyll a', 2 phylloquinones and 3 4Fe-4S clusters. PSI core antenna: 90 divinyl chlorophyll a, 22 carotenoids, 3 phospholipids and 1 galactolipid. P700 is a divinyl chlorophyll a/divinyl chlorophyll a' dimer, A0 is one or more divinyl chlorophyll a, A1 is one or both phylloquinones and FX is a shared 4Fe-4S iron-sulfur center. serves as cofactor.

The protein resides in the cellular thylakoid membrane. It catalyses the reaction reduced [plastocyanin] + hnu + oxidized [2Fe-2S]-[ferredoxin] = oxidized [plastocyanin] + reduced [2Fe-2S]-[ferredoxin]. In terms of biological role, psaA and PsaB bind P700, the primary electron donor of photosystem I (PSI), as well as the electron acceptors A0, A1 and FX. PSI is a plastocyanin/cytochrome c6-ferredoxin oxidoreductase, converting photonic excitation into a charge separation, which transfers an electron from the donor P700 chlorophyll pair to the spectroscopically characterized acceptors A0, A1, FX, FA and FB in turn. Oxidized P700 is reduced on the lumenal side of the thylakoid membrane by plastocyanin or cytochrome c6. This is Photosystem I P700 chlorophyll a apoprotein A2 from Prochlorococcus marinus (strain MIT 9313).